Reading from the N-terminus, the 190-residue chain is Xanthine phosphoribosyltransferase (190 aa).

Leu20 and Asn27 together coordinate xanthine. 128-132 (ANGKA) is a binding site for 5-phospho-alpha-D-ribose 1-diphosphate. Xanthine is bound at residue Lys156.

Belongs to the purine/pyrimidine phosphoribosyltransferase family. Xpt subfamily. As to quaternary structure, homodimer.

It is found in the cytoplasm. It carries out the reaction XMP + diphosphate = xanthine + 5-phospho-alpha-D-ribose 1-diphosphate. It participates in purine metabolism; XMP biosynthesis via salvage pathway; XMP from xanthine: step 1/1. Converts the preformed base xanthine, a product of nucleic acid breakdown, to xanthosine 5'-monophosphate (XMP), so it can be reused for RNA or DNA synthesis. This Pseudomonas putida (strain ATCC 700007 / DSM 6899 / JCM 31910 / BCRC 17059 / LMG 24140 / F1) protein is Xanthine phosphoribosyltransferase.